A 420-amino-acid chain; its full sequence is UDP-N-acetylglucosamine 1-carboxyvinyltransferase (420 aa).

22 to 23 serves as a coordination point for phosphoenolpyruvate; it reads KN. Residue arginine 91 coordinates UDP-N-acetyl-alpha-D-glucosamine. Residue cysteine 115 is the Proton donor of the active site. The residue at position 115 (cysteine 115) is a 2-(S-cysteinyl)pyruvic acid O-phosphothioketal. UDP-N-acetyl-alpha-D-glucosamine contacts are provided by residues 120–124, 160–163, aspartate 305, and isoleucine 327; these read RPVDL and KVSV.

Belongs to the EPSP synthase family. MurA subfamily.

It localises to the cytoplasm. The catalysed reaction is phosphoenolpyruvate + UDP-N-acetyl-alpha-D-glucosamine = UDP-N-acetyl-3-O-(1-carboxyvinyl)-alpha-D-glucosamine + phosphate. Its pathway is cell wall biogenesis; peptidoglycan biosynthesis. In terms of biological role, cell wall formation. Adds enolpyruvyl to UDP-N-acetylglucosamine. The sequence is that of UDP-N-acetylglucosamine 1-carboxyvinyltransferase from Pectobacterium atrosepticum (strain SCRI 1043 / ATCC BAA-672) (Erwinia carotovora subsp. atroseptica).